The chain runs to 32 residues: Ranatuerin-2CSa (32 aa).

Residues Cys27 and Cys32 are joined by a disulfide bond.

In terms of tissue distribution, expressed by the skin glands.

The protein resides in the secreted. It is found in the target cell membrane. Functionally, antibacterial peptide with amphipathic alpha-helical structure. Active against E.coli ATCC 25726 (MIC=4-5 uM) and S.aureus ATCC 25923 (MIC=8-10 uM). Has a weak hemolytic activity on human erythrocytes (LC(50)=150-160 uM). This chain is Ranatuerin-2CSa, found in Rana cascadae (Cascades frog).